Reading from the N-terminus, the 234-residue chain is Ribonuclease 3 (234 aa).

Residues 13–136 (YITLEKALGY…LMAGVYLEAG (124 aa)) enclose the RNase III domain. Mg(2+) is bound at residue Glu-49. Residue Asp-53 is part of the active site. Mg(2+) is bound by residues Ser-122 and Glu-125. Glu-125 is an active-site residue. The 70-residue stretch at 163–232 (DYKTALQELT…AYQALQKLKG (70 aa)) folds into the DRBM domain.

This sequence belongs to the ribonuclease III family. As to quaternary structure, homodimer. The cofactor is Mg(2+).

The protein resides in the cytoplasm. It catalyses the reaction Endonucleolytic cleavage to 5'-phosphomonoester.. In terms of biological role, digests double-stranded RNA. Involved in the processing of primary rRNA transcript to yield the immediate precursors to the large and small rRNAs (23S and 16S). Processes some mRNAs, and tRNAs when they are encoded in the rRNA operon. Processes pre-crRNA and tracrRNA of type II CRISPR loci if present in the organism. This is Ribonuclease 3 from Helicobacter acinonychis (strain Sheeba).